Here is a 211-residue protein sequence, read N- to C-terminus: FMN-dependent NADH:quinone oxidoreductase (211 aa).

Residues 17–19 (SYS) and 99–102 (MWNF) contribute to the FMN site.

Belongs to the azoreductase type 1 family. Homodimer. It depends on FMN as a cofactor.

It catalyses the reaction 2 a quinone + NADH + H(+) = 2 a 1,4-benzosemiquinone + NAD(+). The enzyme catalyses N,N-dimethyl-1,4-phenylenediamine + anthranilate + 2 NAD(+) = 2-(4-dimethylaminophenyl)diazenylbenzoate + 2 NADH + 2 H(+). Functionally, quinone reductase that provides resistance to thiol-specific stress caused by electrophilic quinones. In terms of biological role, also exhibits azoreductase activity. Catalyzes the reductive cleavage of the azo bond in aromatic azo compounds to the corresponding amines. The chain is FMN-dependent NADH:quinone oxidoreductase from Exiguobacterium sp. (strain ATCC BAA-1283 / AT1b).